Reading from the N-terminus, the 161-residue chain is MKLSEIADNAGSRKKRMRVGRGIGSGKGKTAGRGGKGQTARSGVRIKGFEGGQMPLHRRLPKRGFNNIFRLDFAEINLDRLQEAIDAKAVDAGAVINAEVLVAAGVVRRAKDGVRLLGRGELKSKLTIEVYGASKPAIAAVEKAGGTVKILAPVKDEGEAA.

The segment at 1 to 44 (MKLSEIADNAGSRKKRMRVGRGIGSGKGKTAGRGGKGQTARSGV) is disordered. The span at 21 to 37 (RGIGSGKGKTAGRGGKG) shows a compositional bias: gly residues.

Belongs to the universal ribosomal protein uL15 family. As to quaternary structure, part of the 50S ribosomal subunit.

Its function is as follows. Binds to the 23S rRNA. The protein is Large ribosomal subunit protein uL15 of Rhodopseudomonas palustris (strain BisA53).